We begin with the raw amino-acid sequence, 140 residues long: ATP synthase epsilon chain (140 aa).

Belongs to the ATPase epsilon chain family. In terms of assembly, F-type ATPases have 2 components, CF(1) - the catalytic core - and CF(0) - the membrane proton channel. CF(1) has five subunits: alpha(3), beta(3), gamma(1), delta(1), epsilon(1). CF(0) has three main subunits: a, b and c.

The protein localises to the cell inner membrane. Its function is as follows. Produces ATP from ADP in the presence of a proton gradient across the membrane. The sequence is that of ATP synthase epsilon chain from Chromobacterium violaceum (strain ATCC 12472 / DSM 30191 / JCM 1249 / CCUG 213 / NBRC 12614 / NCIMB 9131 / NCTC 9757 / MK).